The chain runs to 207 residues: Vexin (207 aa).

A disordered region spans residues 56-100; sequence ELLPHRGDRRDPGDRRRFGRLQTARPPTAHPAKASARPVGISEPK. Over residues 58 to 71 the composition is skewed to basic and acidic residues; the sequence is LPHRGDRRDPGDRR.

Belongs to the vexin family.

It is found in the cell membrane. It localises to the nucleus. In terms of biological role, required for neurogenesis in the neural plate and retina. Strongly cooperates with neural bHLH factors to promote neurogenesis. The polypeptide is Vexin (Homo sapiens (Human)).